We begin with the raw amino-acid sequence, 519 residues long: Membrane-bound transcription factor site-2 protease (519 aa).

Over 1 to 3 (MIP) the chain is Cytoplasmic. Residues 4 to 24 (VSLVVVVVGGWTVVYLTDLVL) form a helical membrane-spanning segment. Residues 25 to 74 (KSSVYFKHSYEDWLENNGLSISPFHIRWQTAVFNRAFYSWGRRKARMLYQ) lie on the Lumenal side of the membrane. The next 2 membrane-spanning stretches (helical) occupy residues 75 to 95 (WFNF…FLLG) and 96 to 107 (KTLMQTLAQMMA). Residues 108–144 (DSPSSYSSSSSSSSSSSSSSSSSSSSSSSLHNEQVLQ) are Lumenal-facing. Positions 115 to 135 (SSSSSSSSSSSSSSSSSSSSS) are disordered. A helical transmembrane segment spans residues 145 to 169 (VVVPGINLPVNQLTYFFTAVLISGV). Residue His171 coordinates Zn(2+). Glu172 is a catalytic residue. 3 helical membrane passes run 174–186 (GHGI…QVRF), 187–209 (NGFG…TTHL), and 229–251 (FVLA…PFYY). His175 provides a ligand contact to Zn(2+). Over 252–446 (TGVGVLITEV…LPVVVETFVK (195 aa)) the chain is Lumenal. N-linked (GlcNAc...) asparagine glycosylation occurs at Asn337. 2 helical membrane-spanning segments follow: residues 447-464 (YLIS…VPCF) and 465-476 (ALDGQWILNSFL). Residues 477-492 (DATLTSVIGDNDVKDL) lie on the Lumenal side of the membrane. Residues 493 to 513 (IGFFILLGGSVLLAANVTLGL) form a helical membrane-spanning segment. Over 514 to 519 (WMVTAR) the chain is Cytoplasmic.

It belongs to the peptidase M50A family. Requires Zn(2+) as cofactor. As to expression, expressed in heart, brain, placenta, lung, liver, muscle, kidney and pancreas.

It localises to the membrane. The protein localises to the cytoplasm. The protein resides in the golgi apparatus membrane. It catalyses the reaction Cleaves several transcription factors that are type-2 transmembrane proteins within membrane-spanning domains. Known substrates include sterol regulatory element-binding protein (SREBP) -1, SREBP-2 and forms of the transcriptional activator ATF6. SREBP-2 is cleaved at the site 477-DRSRILL-|-CVLTFLCLSFNPLTSLLQWGGA-505. The residues Asn-Pro, 11 residues distal to the site of cleavage in the membrane-spanning domain, are important for cleavage by S2P endopeptidase. Replacement of either of these residues does not prevent cleavage, but there is no cleavage if both of these residues are replaced.. Its function is as follows. Zinc metalloprotease that mediates intramembrane proteolysis of proteins such as ATF6, ATF6B, SREBF1/SREBP1 and SREBF2/SREBP2. Catalyzes the second step in the proteolytic activation of the sterol regulatory element-binding proteins (SREBPs) SREBF1/SREBP1 and SREBF2/SREBP2: cleaves SREBPs within the first transmembrane segment, thereby releasing the N-terminal segment with a portion of the transmembrane segment attached. Mature N-terminal SREBP fragments shuttle to the nucleus and activate gene transcription. Also mediates the second step in the proteolytic activation of the cyclic AMP-dependent transcription factor ATF-6 (ATF6 and ATF6B). Involved in intramembrane proteolysis during bone formation. In astrocytes and osteoblasts, upon DNA damage and ER stress, mediates the second step of the regulated intramembrane proteolytic activation of the transcription factor CREB3L1, leading to the inhibition of cell-cycle progression. This Homo sapiens (Human) protein is Membrane-bound transcription factor site-2 protease.